A 407-amino-acid chain; its full sequence is Putative glucose/galactose transporter (407 aa).

Transmembrane regions (helical) follow at residues 11 to 31 (GSLTALFFLMGFITVLNDILI), 47 to 67 (LIQFCFFGAYFIMGGVFGNVI), 70 to 90 (IGYPFGVVLGFVITATGCALF), 96 to 116 (FGSYGFFLGALFILASGIVCL), 139 to 159 (VQAFNSLGTTLGPIFGSLLIF), 180 to 200 (VQMPYLGLAVFSLLLALIMYL), 225 to 245 (FVFGALGIFFYVGGEVAIGSF), 263 to 283 (HYLVYYWGGAMVGRFLGSVLM), 300 to 320 (IVLIALAIIIGGKIALFALTF), 321 to 341 (VGFFNSIMFPTIFSLATLNLG), 349 to 369 (GVISMAIVGGALIPPIQGAVT), and 378 to 398 (NLLYAYGVPLLCYFYILFFAL).

Belongs to the major facilitator superfamily. FHS transporter (TC 2.A.1.7) family.

It localises to the cell inner membrane. Its function is as follows. Intake of glucose and galactose. This Helicobacter pylori (strain ATCC 700392 / 26695) (Campylobacter pylori) protein is Putative glucose/galactose transporter (gluP).